A 3312-amino-acid polypeptide reads, in one-letter code: Cadherin EGF LAG seven-pass G-type receptor 3 (3312 aa).

Positions 1-32 (MMARRPPWRGLGGRSTPILLLLLLSLFPLSQE) are cleaved as a signal peptide. Residues 33 to 2540 (ELGGGGHQGW…RLEGDLELLA (2508 aa)) lie on the Extracellular side of the membrane. 3 disordered regions span residues 90–112 (GRRQSARNSRGPPEQPNEELGIE), 143–199 (GRTG…RKRV), and 212–306 (GSKG…EARK). Residues 159–173 (SSGVPGSGNSSPLPS) are compositionally biased toward low complexity. Residues 290-299 (RPGPRPPGLP) are compositionally biased toward pro residues. 9 Cadherin domains span residues 326–433 (PQYN…SPVF), 434–545 (EQAQ…APQF), 546–651 (SEKR…IPIF), 652–756 (VSTP…RPEF), 757–858 (TMKE…RPVF), 859–961 (QSAH…APQF), 962–1067 (VASH…APVF), 1068–1169 (PAEE…SPVL), and 1170–1265 (NNFQ…RVVI). N632 is a glycosylation site (N-linked (GlcNAc...) asparagine). Residue N847 is glycosylated (N-linked (GlcNAc...) asparagine). N-linked (GlcNAc...) asparagine glycans are attached at residues N1182, N1222, N1317, and N1327. Residues 1375-1433 (DDNVCLREPCENYMKCVSVLRFDSSAPFLASASTLFRPIQPIAGLRCRCPPGFTGDFCE) form the EGF-like 1; calcium-binding domain. Disulfide bonds link C1379/C1390, C1384/C1421, C1423/C1432, C1439/C1450, C1444/C1459, C1461/C1470, C1479/C1490, C1484/C1500, and C1502/C1513. The region spanning 1435-1471 (ELDLCYSNPCRNGGACARREGGYTCVCRPRFTGEDCE) is the EGF-like 2; calcium-binding domain. The EGF-like 3; calcium-binding domain occupies 1475–1514 (EAGRCVPGVCRNGGTCTDAPNGGFRCQCPAGGAFEGPRCE). Positions 1515–1719 (VAARSFPPSS…VANNGTMAGC (205 aa)) constitute a Laminin G-like 1 domain. N-linked (GlcNAc...) asparagine glycosylation is found at N1649 and N1713. Cystine bridges form between C1693/C1719, C1726/C1737, C1731/C1746, and C1748/C1757. The region spanning 1722 to 1758 (KLHFCDSGPCKNSGFCSERWGSFSCDCPVGFGGKDCQ) is the EGF-like 4; calcium-binding domain. The Laminin G-like 2 domain occupies 1764 to 1944 (PHHFRGNGTL…SHRVNAEPGC (181 aa)). Residue N1770 is glycosylated (N-linked (GlcNAc...) asparagine). 9 cysteine pairs are disulfide-bonded: C1915-C1944, C1950-C1961, C1955-C1970, C1972-C1981, C1985-C1996, C1990-C2008, C2010-C2019, C2027-C2040, and C2042-C2052. In terms of domain architecture, EGF-like 5; calcium-binding spans 1946 to 1982 (VTNACASGPCPPHADCRDLWQTFSCTCQPGYYGPGCV). The residue at position 1963 (D1963) is a (3R)-3-hydroxyaspartate. Positions 1983-2020 (DACLLNPCQNQGSCRHLPGAPHGYTCDCVGGYFGHHCE) constitute an EGF-like 6; calcium-binding domain. The EGF-like 7; calcium-binding domain maps to 2021–2053 (HRMDQQCPRGWWGSPTCGPCNCDVHKGFDPNCN). N-linked (GlcNAc...) asparagine glycosylation is present at N2053. The region spanning 2055–2090 (TNGQCHCKEFHYRPRGSDSCLPCDCYPVGSTSRSCA) is the EGF-like 8; calcium-binding domain. Cystine bridges form between C2059/C2074, C2061/C2077, C2079/C2089, C2098/C2107, and C2110/C2122. Positions 2077-2124 (CDCYPVGSTSRSCAPHSGQCPCRPGALGRQCNSCDSPFAEVTASGCRV) constitute a Laminin EGF-like domain. Position 2126 is a phosphotyrosine (Y2126). 5 N-linked (GlcNAc...) asparagine glycosylation sites follow: N2177, N2196, N2386, N2474, and N2506. The interval 2361–2399 (THVLLPSQSPRPSPSEVLPTSSSIENSTTSSVVPPPAPP) is disordered. One can recognise a GAIN-B domain in the interval 2368–2530 (QSPRPSPSEV…GVLMDASPRE (163 aa)). Positions 2380 to 2391 (TSSSIENSTTSS) are enriched in low complexity. Cystine bridges form between C2480–C2512 and C2500–C2514. The GPS stretch occupies residues 2480 to 2530 (CVQWDPPGLAEQHGVWTARDCELVHRNGSHARCRCSRTGTFGVLMDASPRE). A helical membrane pass occupies residues 2541 to 2561 (VFTHVVVAVSVAALVLTAAIL). Over 2562-2572 (LSLRSLKSNVR) the chain is Cytoplasmic. Residues 2573-2593 (GIHANVAAALGVAELLFLLGI) form a helical membrane-spanning segment. Residues 2594–2601 (HRTHNQLV) lie on the Extracellular side of the membrane. The helical transmembrane segment at 2602-2622 (CTAVAILLHYFFLSTFAWLFV) threads the bilayer. Residues 2623-2643 (QGLHLYRMQVEPRNVDRGAMR) are Cytoplasmic-facing. The chain crosses the membrane as a helical span at residues 2644–2664 (FYHALGWGVPAVLLGLAVGLD). Residues 2665 to 2681 (PEGYGNPDFCWISVHEP) lie on the Extracellular side of the membrane. The chain crosses the membrane as a helical span at residues 2682 to 2702 (LIWSFAGPVVLVIVMNGTMFL). Residues 2703–2725 (LAARTSCSTGQREAKKTSALTLR) lie on the Cytoplasmic side of the membrane. Residues 2726–2746 (SSFLLLLLVSASWLFGLLAVN) traverse the membrane as a helical segment. Topologically, residues 2747 to 2753 (HSILAFH) are extracellular. The helical transmembrane segment at 2754–2774 (YLHAGLCGLQGLAVLLLFCVL) threads the bilayer. Residues 2775–3312 (NADARAAWMP…SEVPRSEGHS (538 aa)) lie on the Cytoplasmic side of the membrane. Disordered stretches follow at residues 2888–2927 (AGADSDSDSDLSLEEERSLSIPSSESEDNGRTRGRFQRPL) and 2978–3006 (TSKDAANNNQPDPALTSGDETSLGRAQRQ). Over residues 2890 to 2900 (ADSDSDSDLSL) the composition is skewed to acidic residues. Y3051 carries the post-translational modification Phosphotyrosine. 2 disordered regions span residues 3086–3243 (EEAP…TEQL) and 3256–3312 (SALS…EGHS). The residue at position 3097 (S3097) is a Phosphoserine. 3 stretches are compositionally biased toward low complexity: residues 3175–3198 (SPQRQLSRDPLLPSRPLDSLSRSS), 3256–3265 (SALSSVQSSS), and 3272–3281 (TTATPSATAS). A compositionally biased stretch (polar residues) spans 3287 to 3300 (TPRSATSHSISELS).

Belongs to the G-protein coupled receptor 2 family. LN-TM7 subfamily.

It is found in the cell membrane. Receptor that may have an important role in cell/cell signaling during nervous system formation. This Homo sapiens (Human) protein is Cadherin EGF LAG seven-pass G-type receptor 3 (CELSR3).